The following is a 784-amino-acid chain: 5-methyltetrahydropteroyltriglutamate--homocysteine methyltransferase (784 aa).

5-methyltetrahydropteroyltri-L-glutamate contacts are provided by residues 16–19 and Lys112; that span reads RELK. L-homocysteine-binding positions include 460–462 and Glu513; that span reads IGS. Residues 460–462 and Glu513 contribute to the L-methionine site; that span reads IGS. Residue Trp590 coordinates 5-methyltetrahydropteroyltri-L-glutamate. Asp628 provides a ligand contact to L-homocysteine. Asp628 contributes to the L-methionine binding site. 5-methyltetrahydropteroyltri-L-glutamate is bound at residue Glu634. 3 residues coordinate Zn(2+): His670, Cys672, and Glu694. Catalysis depends on His723, which acts as the Proton donor. Position 755 (Cys755) interacts with Zn(2+).

This sequence belongs to the vitamin-B12 independent methionine synthase family. It depends on Zn(2+) as a cofactor.

The enzyme catalyses 5-methyltetrahydropteroyltri-L-glutamate + L-homocysteine = tetrahydropteroyltri-L-glutamate + L-methionine. Its pathway is amino-acid biosynthesis; L-methionine biosynthesis via de novo pathway; L-methionine from L-homocysteine (MetE route): step 1/1. Functionally, catalyzes the transfer of a methyl group from 5-methyltetrahydrofolate to homocysteine resulting in methionine formation. The polypeptide is 5-methyltetrahydropteroyltriglutamate--homocysteine methyltransferase (Acidithiobacillus ferrooxidans (strain ATCC 23270 / DSM 14882 / CIP 104768 / NCIMB 8455) (Ferrobacillus ferrooxidans (strain ATCC 23270))).